The following is a 740-amino-acid chain: ATP-dependent DNA helicase Hel308 (740 aa).

Residues glutamine 28 and 46 to 53 (IPTASGKT) each bind ATP. The 172-residue stretch at 33 to 204 (RQGLLDGKNL…WMDAALVQSE (172 aa)) folds into the Helicase ATP-binding domain. The short motif at 149–152 (DEVH) is the DEAH box element. The Helicase C-terminal domain occupies 236-436 (EVNSLVADTL…EPAMRAHALS (201 aa)). A disordered region spans residues 716-740 (VDHTPPETEEQPQVSGQSTLFSFDG). The span at 726-740 (QPQVSGQSTLFSFDG) shows a compositional bias: polar residues.

Belongs to the helicase family. Hel308 subfamily. Monomer.

It carries out the reaction Couples ATP hydrolysis with the unwinding of duplex DNA by translocating in the 3'-5' direction.. The enzyme catalyses ATP + H2O = ADP + phosphate + H(+). DNA-dependent ATPase and 3'-5' DNA helicase that may be involved in repair of stalled replication forks. The protein is ATP-dependent DNA helicase Hel308 of Methanocella arvoryzae (strain DSM 22066 / NBRC 105507 / MRE50).